A 97-amino-acid chain; its full sequence is Aspartyl/glutamyl-tRNA(Asn/Gln) amidotransferase subunit C (97 aa).

This sequence belongs to the GatC family. As to quaternary structure, heterotrimer of A, B and C subunits.

The enzyme catalyses L-glutamyl-tRNA(Gln) + L-glutamine + ATP + H2O = L-glutaminyl-tRNA(Gln) + L-glutamate + ADP + phosphate + H(+). The catalysed reaction is L-aspartyl-tRNA(Asn) + L-glutamine + ATP + H2O = L-asparaginyl-tRNA(Asn) + L-glutamate + ADP + phosphate + 2 H(+). Allows the formation of correctly charged Asn-tRNA(Asn) or Gln-tRNA(Gln) through the transamidation of misacylated Asp-tRNA(Asn) or Glu-tRNA(Gln) in organisms which lack either or both of asparaginyl-tRNA or glutaminyl-tRNA synthetases. The reaction takes place in the presence of glutamine and ATP through an activated phospho-Asp-tRNA(Asn) or phospho-Glu-tRNA(Gln). The chain is Aspartyl/glutamyl-tRNA(Asn/Gln) amidotransferase subunit C from Cyanothece sp. (strain PCC 7425 / ATCC 29141).